A 272-amino-acid chain; its full sequence is Putative phosphoenolpyruvate synthase regulatory protein (272 aa).

Gly152–Thr159 is a binding site for ADP.

The protein belongs to the pyruvate, phosphate/water dikinase regulatory protein family. PSRP subfamily.

The enzyme catalyses [pyruvate, water dikinase] + ADP = [pyruvate, water dikinase]-phosphate + AMP + H(+). It carries out the reaction [pyruvate, water dikinase]-phosphate + phosphate + H(+) = [pyruvate, water dikinase] + diphosphate. Bifunctional serine/threonine kinase and phosphorylase involved in the regulation of the phosphoenolpyruvate synthase (PEPS) by catalyzing its phosphorylation/dephosphorylation. The chain is Putative phosphoenolpyruvate synthase regulatory protein from Alcanivorax borkumensis (strain ATCC 700651 / DSM 11573 / NCIMB 13689 / SK2).